A 765-amino-acid chain; its full sequence is Carboxysome assembly protein CsoS2 (765 aa).

A compositionally biased stretch (basic and acidic residues) spans 1 to 22 (MSTKTSREIALERRKAMSDGGK). Disordered regions lie at residues 1-107 (MSTK…RTDV) and 165-229 (REAQ…NKNG). The tract at residues 1–215 (MSTKTSREIA…RSKTGSTSKQ (215 aa)) is N-terminal domain. An N-repeat 1 repeat occupies 7 to 22 (REIALERRKAMSDGGK). Over residues 38–63 (SQDINSTGATSSNKKVLTSPSKSNIP) the composition is skewed to polar residues. The segment covering 77–87 (SSKELGIERRK) has biased composition (basic and acidic residues). N-repeat repeat units lie at residues 79–94 (KELG…THGK), 158–173 (RDIV…KHGK), and 196–211 (REIS…KTGS). The span at 187 to 207 (RRGDPDLSSREISQRVRELRS) shows a compositional bias: basic and acidic residues. The segment at 216–586 (GNGKCRPCGP…LSNCETPPND (371 aa)) is middle region. 6 M-repeat repeats span residues 240–289 (KVGK…GQFC), 300–349 (RASV…KKYC), 358–397 (KVMQ…GDQY), 411–460 (KVGS…EKFC), 470–519 (KVGL…NDNC), and 530–580 (RATV…LSNC). 2 disordered regions span residues 306-328 (TTSG…GDEP) and 367-413 (GLKV…EKVG). The C-terminal domain stretch occupies residues 589–734 (YANQEKSASN…AMPPVDNKRN (146 aa)). C-repeat repeat units follow at residues 604–648 (SVNS…GTEQ) and 677–711 (KKEP…EGVS). Disordered stretches follow at residues 611–637 (EKYS…GPFD) and 656–765 (NMTY…GARG). The span at 730–741 (DNKRNDETEKPD) shows a compositional bias: basic and acidic residues. The tract at residues 735 to 765 (DETEKPDFLITGSSGNTRDGQLVTFSGGARG) is C-terminal peptide.

The protein belongs to the CsoS2 family. As to quaternary structure, probably interacts with the carboxysome major shell protein CsoS1 via the N-terminal domain. A CsoS1-CsoS1D-CsoS2 complex can be isolated following expression in E.coli. Interacts via its N-terminal repeats with RuBisCO. Post-translationally, unlike H.neapolitanus and predictions for P.marinus strain MIT 9313, this protein is not thought to have ribosomal frameshifting.

It is found in the carboxysome. Its function is as follows. Required for alpha-carboxysome (Cb) assembly, mediates interaction between RuBisCO and the Cb shell. The protein is probably highly flexible. The C-terminal repeats act as the encapsulation signal to target proteins to the Cb; they are necessary and sufficient to target both CsoS2 and foreign proteins to the Cb. The N-terminal repeats of this protein bind simultaneously to both subunits of RuBisCO. Probably also interacts with the major shell proteins (CsoS1); that interaction would increase the local concentration of CsoS2 so that it can condense RuBisCO and full carboxysomes can be formed. There are estimated to be 163 CsoS2 proteins per carboxysome; unlike H.neapolitanus only 1 form is seen. In Prochlorococcus marinus subsp. pastoris (strain CCMP1986 / NIES-2087 / MED4), this protein is Carboxysome assembly protein CsoS2.